The following is a 289-amino-acid chain: Homeobox protein Nkx-2.6 (289 aa).

Disordered stretches follow at residues 75 to 125 and 259 to 289; these read GSNP…PQRK and TPLA…VTAW. A DNA-binding region (homeobox) is located at residues 123–182; sequence QRKSRVLFSQAQVLALERRFKQQRYLTAPEREHLASALQLTSTQVKIWFQNRRYKSKSQR. Residues 261–274 show a composition bias toward polar residues; the sequence is LASSGFSPGGQSAA.

Belongs to the NK-2 homeobox family. As to expression, not detected in any neonate or adult tissues.

It is found in the nucleus. Its function is as follows. Acts as a transcriptional activator. In conjunction with NKX2-5, may play a role in both pharyngeal and cardiac embryonic development. The polypeptide is Homeobox protein Nkx-2.6 (Nkx2-6) (Mus musculus (Mouse)).